A 587-amino-acid polypeptide reads, in one-letter code: DELLA protein RGA (587 aa).

A disordered region spans residues 1–26 (MKRDHHQFQGRLSNHGTSSSSSSISK). A DELLA motif motif is present at residues 44 to 48 (DELLA). Positions 66 to 70 (LEQLE) match the LEXLE motif motif. The VHYNP motif motif lies at 89 to 93 (VHYNP). Residues 152-181 (IDSSSSSNNQNKRLKSCSSPDSMVTSTSTG) form a disordered region. Polar residues predominate over residues 153-175 (DSSSSSNNQNKRLKSCSSPDSMV). Residues 212–581 (VDSQENGVRL…RPLITTSAWK (370 aa)) form the GRAS domain. The leucine repeat I (LRI) stretch occupies residues 219 to 273 (VRLVHALMACAEAIQQNNLTLAEALVKQIGCLAVSQAGAMRKVATYFAEALARRI). The interval 292–357 (QMHFYETCPY…GGPPTFRLTG (66 aa)) is VHIID. The VHIID motif lies at 323–327 (VHVID). Positions 371–403 (EVGCKLAQLAEAIHVEFEYRGFVANSLADLDAS) are leucine repeat II (LRII). The PFYRE stretch occupies residues 415 to 502 (VAVNSVFELH…EVYLGKQICN (88 aa)). The LXXLL motif motif lies at 423–427 (LHKLL). The segment at 505-581 (ACEGPDRVER…RPLITTSAWK (77 aa)) is SAW.

This sequence belongs to the GRAS family. DELLA subfamily. In terms of assembly, interacts directly with the GID2/SLY1 component of the SCF(GID2) complex. Interacts (via N-terminus) with GID1A, GID1B and GID1B (via N-terminus). Binds to bHLH transcription factors such as MYC2, PIF1, PIF4, PIF6 and SPT. Interacts with the BOI proteins BOI, BRG1, BRG2 and BRG3. Interacts with NFYC9. Interacts with TOPP4. Interacts with FLZ5. Binds to zinc finger proteins MGP/IDD3, IDD4, IDD5, BIB/IDD9 and JKD/IDD10 in the nucleus. Binds to and coactivates GAF1/IDD2 and ENY/IDD1. Binds to PDF2 and ATML1. Post-translationally, phosphorylated. Phosphorylation may increase the interaction with GID2. Gibberellin (GA) induces dephosphorylation of RGA by TOPP4 and subsequent degradation by the proteasomal pathway. In terms of processing, ubiquitinated. Upon GA application it is ubiquitinated by the SCF(GID2) complex, leading to its subsequent degradation. Post-translationally, O-fucosylated by SPY. O-fucosylation enhances RGA activity by promoting RGA binding to key transcription factors in brassinosteroid and light signaling pathways. In terms of tissue distribution, ubiquitously expressed. Expressed in roots, rosette leaves, bolting and mature stems, young and mature siliques, flower buds and influorescences.

It is found in the nucleus. In terms of biological role, probable transcriptional regulator that acts as a repressor of the gibberellin (GA) signaling pathway. Probably acts by participating in large multiprotein complexes that repress transcription of GA-inducible genes. Positively regulates XERICO expression in seeds. Upon GA application, it is degraded by the proteasome, allowing the GA signaling pathway. Compared to other DELLA proteins, it is the most sensitive to GA application. No effect of the BOI proteins on its stability. Its activity is probably regulated by other phytohormones such as auxin and ethylene, attenuation of auxin transport delaying its GA-induced degradation. Involved in the regulation of seed dormancy and germination, including glucose-induced delay of seed germination. The sequence is that of DELLA protein RGA from Arabidopsis thaliana (Mouse-ear cress).